A 120-amino-acid chain; its full sequence is Large-conductance mechanosensitive channel (120 aa).

A run of 2 helical transmembrane segments spans residues 7–27 and 64–84; these read EFALKGNVLDLAIAVVMGAAF and GLFIQSVIDFIIIAFALFIFV.

Belongs to the MscL family. As to quaternary structure, homopentamer.

It is found in the cell membrane. Its function is as follows. Channel that opens in response to stretch forces in the membrane lipid bilayer. May participate in the regulation of osmotic pressure changes within the cell. This chain is Large-conductance mechanosensitive channel, found in Staphylococcus aureus (strain Mu3 / ATCC 700698).